The primary structure comprises 442 residues: Lysosomal dipeptide transporter MFSD1 (442 aa).

The Dileucine internalization motif signature appears at 8–9 (LL). 10 helical membrane passes run 38–58 (LLVL…YDNP), 85–105 (TVIF…GALV), 107–127 (AFWL…SLAV), 187–207 (LLIG…LAYL), 238–258 (LWLI…FIGL), 276–296 (AINS…GILV), 303–323 (IIWV…LAFT), 333–353 (LLGV…AFVV), 364–384 (FMQS…GMIL), and 390–410 (LFLE…VVML).

The protein belongs to the major facilitator superfamily. As to quaternary structure, homodimer. Interacts with lysosomal protein GLMP (via lumenal domain); the interaction starts while both proteins are still in the endoplasmic reticulum and is required for stabilization of MFSD1 in lysosomes but has no direct effect on its targeting to lysosomes or transporter activity.

It is found in the lysosome membrane. The catalysed reaction is L-alpha-aminoacyl-L-arginine(out) = L-alpha-aminoacyl-L-arginine(in). It carries out the reaction L-arginyl-L-alpha-amino acid(out) = L-arginyl-L-alpha-amino acid(in). It catalyses the reaction L-arginyl-glycine(out) = L-arginyl-glycine(in). The enzyme catalyses L-alpha-aminoacyl-L-lysine(out) = L-alpha-aminoacyl-L-lysine(in). The catalysed reaction is L-aspartyl-L-lysine(out) = L-aspartyl-L-lysine(in). It carries out the reaction L-alanyl-L-lysine(out) = L-alanyl-L-lysine(in). It catalyses the reaction L-lysyl-L-alpha-amino acid(out) = L-lysyl-L-alpha-amino acid(in). The enzyme catalyses L-lysyl-L-alanine(out) = L-lysyl-L-alanine(in). The catalysed reaction is L-lysyl-L-lysine(out) = L-lysyl-L-lysine(in). It carries out the reaction L-lysyl-glycine(out) = L-lysyl-glycine(in). It catalyses the reaction L-alpha-aminoacyl-L-histidine(out) = L-alpha-aminoacyl-L-histidine(in). The enzyme catalyses L-histidyl-L-alpha-amino acid(out) = L-histidyl-L-alpha-amino acid(in). The catalysed reaction is L-histidyl-glycine(out) = L-histidyl-glycine(in). In terms of biological role, lysosomal dipeptide uniporter that selectively exports lysine, arginine or histidine-containing dipeptides with a net positive charge from the lysosome lumen into the cytosol. Could play a role in a specific type of protein O-glycosylation indirectly regulating macrophages migration and tissue invasion. Also essential for liver homeostasis. This chain is Lysosomal dipeptide transporter MFSD1, found in Gallus gallus (Chicken).